Consider the following 417-residue polypeptide: Lactose permease (417 aa).

Met-1 bears the N-formylmethionine; partial mark. At 1-7 (MYYLKNT) the chain is on the cytoplasmic side. The chain crosses the membrane as a helical span at residues 8–34 (NFWMFGLFFFFYFFIMGAYFPFFPIWL). Residues 35–41 (HDINHIS) are Periplasmic-facing. A helical membrane pass occupies residues 42–70 (KSDTGIIFAAISLFSLLFQPLFGLLSDKL). Residues 71–74 (GLRK) are Cytoplasmic-facing. A helical membrane pass occupies residues 75-100 (YLLWIITGMLVMFAPFFIFIFGPLLQ). The Periplasmic segment spans residues 101–104 (YNIL). The chain crosses the membrane as a helical span at residues 105–129 (VGSIVGGIYLGFCFNAGAPAVEAFI). Over 130-140 (EKVSRRSNFEF) the chain is Cytoplasmic. The helical transmembrane segment at 141–163 (GRARMFGCVGWALCASIVGIMFT) threads the bilayer. Over 164-166 (INN) the chain is Periplasmic. A helical transmembrane segment spans residues 167–186 (QFVFWLGSGCALILAVLLFF). Topologically, residues 187–220 (AKTDAPSSATVANAVGANHSAFSLKLALELFRQP) are cytoplasmic. A helical transmembrane segment spans residues 221-249 (KLWFLSLYVIGVSCTYDVFDQQFANFFTS). Over 250-253 (FFAT) the chain is Periplasmic. A helical membrane pass occupies residues 254–278 (GEQGTRVFGYVTTMGELLNASIMFF). The Cytoplasmic portion of the chain corresponds to 279 to 288 (APLIINRIGG). Residues 289 to 308 (KNALLLAGTIMSVRIIGSSF) form a helical membrane-spanning segment. Topologically, residues 309-311 (ATS) are periplasmic. A helical transmembrane segment spans residues 312 to 334 (ALEVVILKTLHMFEVPFLLVGCF). Over 335-346 (KYITSQFEVRFS) the chain is Cytoplasmic. The chain crosses the membrane as a helical span at residues 347 to 374 (ATIYLVCFCFFKQLAMIFMSVLAGNMYE). Over 375–377 (SIG) the chain is Periplasmic. The helical transmembrane segment at 378–398 (FQGAYLVLGLVALGFTLISVF) threads the bilayer. Over 399–417 (TLSGPGPLSLLRRQVNEVA) the chain is Cytoplasmic.

Monomer.

Its subcellular location is the cell inner membrane. The catalysed reaction is lactose(in) + H(+)(in) = lactose(out) + H(+)(out). It catalyses the reaction melibiose(in) + H(+)(in) = melibiose(out) + H(+)(out). Inhibited by the proton ionophore carbonyl cyanide m-chlorophenylhydrazone (CCCP). In terms of biological role, responsible for transport of beta-galactosides into the cell, with the concomitant import of a proton (symport system). Can transport lactose, melibiose, the synthetic disaccharide lactulose or the analog methyl-1-thio-beta,D-galactopyranoside (TMG), but not sucrose or fructose. The substrate specificity is directed toward the galactopyranosyl moiety of the substrate. This Escherichia coli (strain K12) protein is Lactose permease.